The chain runs to 204 residues: dCTP deaminase, dUMP-forming (204 aa).

DCTP-binding positions include 117–122, His128, Gly132, Asp135, 143–145, Gln163, Tyr177, Lys184, and Gln188; these read RSSLGR and TLE. The active-site Proton donor/acceptor is Glu145.

In terms of assembly, homotrimer. Two trimers assemble into a hexamer by stacking on top of each other. It depends on Mg(2+) as a cofactor.

It carries out the reaction dCTP + 2 H2O = dUMP + NH4(+) + diphosphate. The protein operates within pyrimidine metabolism; dUMP biosynthesis; dUMP from dCTP: step 1/1. With respect to regulation, inhibited by dTTP. In terms of biological role, bifunctional enzyme that catalyzes both the deamination of dCTP to dUTP and the hydrolysis of dUTP to dUMP without releasing the toxic dUTP intermediate. It also acts as a dUTP diphosphatase with a lower affinity for dUTP than for dCTP. The polypeptide is dCTP deaminase, dUMP-forming (Methanocaldococcus jannaschii (strain ATCC 43067 / DSM 2661 / JAL-1 / JCM 10045 / NBRC 100440) (Methanococcus jannaschii)).